Consider the following 282-residue polypeptide: 3-oxoadipate CoA-transferase subunit A (282 aa).

The protein belongs to the 3-oxoacid CoA-transferase subunit A family. As to quaternary structure, heterotetramer composed of 2 A and 2 B subunits.

It catalyses the reaction 3-oxoadipate + succinyl-CoA = 3-oxoadipyl-CoA + succinate. Its pathway is aromatic compound metabolism; beta-ketoadipate pathway; acetyl-CoA and succinyl-CoA from 3-oxoadipate: step 1/2. Catalyzes the CoA transfer from succinate to 3-oxoadipate (beta-ketoadipate). This chain is 3-oxoadipate CoA-transferase subunit A (catI), found in Pseudomonas knackmussii (strain DSM 6978 / CCUG 54928 / LMG 23759 / B13).